The following is a 238-amino-acid chain: Cysteine-rich venom protein pseudechetoxin-like (238 aa).

A signal peptide spans 1 to 19 (MIAFTVLLSLAAVLQQSSG). The propeptide occupies 20–28 (TVDFASESS). The SCP domain maps to 38-164 (VDKHNDLRRS…STKYLYVCQY (127 aa)). Cystine bridges form between C75–C153, C92–C165, C148–C162, C184–C191, C187–C196, C200–C233, C209–C227, and C218–C231. The region spanning 200–233 (CKHNNDFSNCKALAKKSKCQTEWIKSKCPATCFC) is the ShKT domain.

The protein belongs to the CRISP family. Expressed by the venom gland.

The protein resides in the secreted. Functionally, blocks olfactory (CNGA2) and retinal (CNGA1) CNG channel currents. Does not affect neither depolarization- nor caffeine-induced contraction of smooth muscle. The sequence is that of Cysteine-rich venom protein pseudechetoxin-like from Oxyuranus scutellatus scutellatus (Australian taipan).